The sequence spans 791 residues: IQ motif and ubiquitin-like domain-containing protein (791 aa).

The interval 1-73 (MSNQQEKYEA…SDQSFSSLEP (73 aa)) is disordered. Positions 131-207 (ATVKVVLIPV…VQVEIFSTNP (77 aa)) constitute a Ubiquitin-like domain. One can recognise an IQ domain in the interval 338 to 367 (RLKAVIVIQTYYRQWHAKIFVENLRRQKSL).

Component of the axonemal radial spoke 1 (RS1) complex, at least composed of spoke head proteins RSPH1, RSPH3, RSPH9 and the cilia-specific component RSPH4A or sperm-specific component RSPH6A, spoke stalk proteins RSPH14, DNAJB13, DYDC1, ROPN1L and NME5, and the anchor protein IQUB. Does not appear to be part of radial spoke complexes 2 or 3 (RS2 or RS3). Interacts with CALM1. Interacts with DNAJB13. Interacts with DYNLL2. Interacts with NME5. Interacts with RSPH3. Interacts with RSPH9. Interacts with ZMYND10. Interacts with calmodulin; the interaction occurs in conditions of low but not high calcium.

Its subcellular location is the cytoplasm. The protein resides in the cytoskeleton. It is found in the flagellum axoneme. It localises to the cell projection. The protein localises to the cilium. In terms of biological role, adapter protein that anchors the radial spoke 1 (RS1) complex to the A microtubule of outer doublet microtubules in axonemes. The triple radial spokes (RS1, RS2 and RS3) are required to modulate beating of the sperm flagellum. May play a role in inhibiting signaling via MAPK1/ERK2 and MAPK3/ERK1. Additionally, may play a role in the functioning of cilia. Not required for the functioning of tracheal or ependymal cilia. This Homo sapiens (Human) protein is IQ motif and ubiquitin-like domain-containing protein (IQUB).